A 153-amino-acid polypeptide reads, in one-letter code: Deoxyuridine 5'-triphosphate nucleotidohydrolase (153 aa).

Residues 71–73 (RSG), asparagine 84, 88–90 (LID), and methionine 98 contribute to the substrate site.

Belongs to the dUTPase family. It depends on Mg(2+) as a cofactor.

It catalyses the reaction dUTP + H2O = dUMP + diphosphate + H(+). It participates in pyrimidine metabolism; dUMP biosynthesis; dUMP from dCTP (dUTP route): step 2/2. Its function is as follows. This enzyme is involved in nucleotide metabolism: it produces dUMP, the immediate precursor of thymidine nucleotides and it decreases the intracellular concentration of dUTP so that uracil cannot be incorporated into DNA. The sequence is that of Deoxyuridine 5'-triphosphate nucleotidohydrolase from Wigglesworthia glossinidia brevipalpis.